The sequence spans 285 residues: tRNA uridine(34) hydroxylase (285 aa).

The region spanning 130–225 (RGDDVVFFDG…YGEAFGDTGL (96 aa)) is the Rhodanese domain. Cys-185 functions as the Cysteine persulfide intermediate in the catalytic mechanism.

The protein belongs to the TrhO family.

The enzyme catalyses uridine(34) in tRNA + AH2 + O2 = 5-hydroxyuridine(34) in tRNA + A + H2O. Its function is as follows. Catalyzes oxygen-dependent 5-hydroxyuridine (ho5U) modification at position 34 in tRNAs. This is tRNA uridine(34) hydroxylase from Rhodococcus jostii (strain RHA1).